Consider the following 735-residue polypeptide: Transcription factor RFX4 (735 aa).

The interval 25 to 59 (SESKRFSSHSSIGNISNDENEEKENNRASKPHSTP) is disordered. A DNA-binding region spans residues 44–126 (NEEKENNRAS…RRLGTRGQSK (83 aa)). Residues 61 to 136 (TLQWLEENYE…YHYYGIAVKE (76 aa)) constitute a DNA-binding region (RFX-type winged-helix). Residues 315–487 (RFSQILKRQT…NELMRAMKGE (173 aa)) are necessary for dimerization.

This sequence belongs to the RFX family.

It is found in the nucleus. May activate transcription by interacting directly with the X-box. This is Transcription factor RFX4 (rfx4) from Danio rerio (Zebrafish).